The sequence spans 193 residues: ATP-dependent Clp protease proteolytic subunit (193 aa).

S98 acts as the Nucleophile in catalysis. H123 is an active-site residue.

Belongs to the peptidase S14 family. Fourteen ClpP subunits assemble into 2 heptameric rings which stack back to back to give a disk-like structure with a central cavity, resembling the structure of eukaryotic proteasomes.

It localises to the cytoplasm. It catalyses the reaction Hydrolysis of proteins to small peptides in the presence of ATP and magnesium. alpha-casein is the usual test substrate. In the absence of ATP, only oligopeptides shorter than five residues are hydrolyzed (such as succinyl-Leu-Tyr-|-NHMec, and Leu-Tyr-Leu-|-Tyr-Trp, in which cleavage of the -Tyr-|-Leu- and -Tyr-|-Trp bonds also occurs).. Its function is as follows. Cleaves peptides in various proteins in a process that requires ATP hydrolysis. Has a chymotrypsin-like activity. Plays a major role in the degradation of misfolded proteins. This is ATP-dependent Clp protease proteolytic subunit from Agathobacter rectalis (strain ATCC 33656 / DSM 3377 / JCM 17463 / KCTC 5835 / VPI 0990) (Eubacterium rectale).